Here is a 670-residue protein sequence, read N- to C-terminus: uncharacterized protein (670 aa).

The next 10 membrane-spanning stretches (helical) occupy residues 23-42 (YALRNTIAMCLALTVAYYLN), 47-69 (YWAMTSAAVVSFPTVGGVISKSL), 76-98 (LLGAIAALLLAGHTLNEPWFFLL), 118-140 (VAYAFQLAGYTAAIIAFPMVNIT), 153-170 (VCEVIVGILCGGMMMMIL), 381-403 (QWDAGANALTLAAISCVLYSAVA), 410-432 (SLLMRTLVLLSLFSFVVKFGLMV), 437-454 (LWQFLLFLFPLLATMQLL), 461-483 (FAALWGQLIVFMGSFIAVTNPPV), and 493-510 (NLAKIVGVALAWLAFAIL).

The protein belongs to the aromatic acid exporter ArAE (TC 2.A.85) family.

Its subcellular location is the cell membrane. This is an uncharacterized protein from Escherichia coli (strain K12).